The sequence spans 555 residues: Galectin-3-binding protein (555 aa).

An N-terminal signal peptide occupies residues 1–18; sequence MAPLRLFWIWLLVVGTRG. The 101-residue stretch at 24 to 124 folds into the SRCR domain; the sequence is MRLADGGSAN…HDKDASVICT (101 aa). 3 cysteine pairs are disulfide-bonded: C49-C113, C62-C123, and C93-C103. Residue N69 is glycosylated (N-linked (GlcNAc...) asparagine). N-linked (GlcNAc...) asparagine glycosylation is present at N125. One can recognise a BTB domain in the interval 153-221; that stretch reads CDLFITVKVR…LYSRRIDVSL (69 aa). The region spanning 260 to 360 is the BACK domain; the sequence is PLELYAYALA…MPPQDLFSLQ (101 aa). N362, N398, and N550 each carry an N-linked (GlcNAc...) asparagine glycan.

In terms of assembly, homodimers and homomultimers. The multimers form ring-like structures with a diameter of 30-40 nm. Binds LGALS1 and LGALS3. Binds ITGB1, COL4A1, COL5A1, COL6A1, FN1 and NID. Interacts with the gamma-tubulin ring complex (gamma-TuRC), composed of gamma-tubulin, TUBGCP2, TUBGCP3, TUBGCP4, TUBGCP5 and TUBGCP6. The unglycosylated form interacts with PDE4DIP; this interaction, which is PDE4DIP isoform-specific, may connect a pericentrosomal complex, made of AKAP9, CDK5RAP2, EB1/MAPRE1 and PDE4DIP, to the gamma-tubulin ring complex (gamma-TuRC) to promote microtubule assembly and acetylation.

It localises to the secreted. Its subcellular location is the extracellular space. It is found in the extracellular matrix. In terms of biological role, promotes integrin-mediated cell adhesion. May stimulate host defense against viruses and tumor cells. The sequence is that of Galectin-3-binding protein (LGALS3BP) from Bos taurus (Bovine).